Here is a 151-residue protein sequence, read N- to C-terminus: Macrodomain Ter protein (151 aa).

It belongs to the MatP family. Homodimer.

The protein resides in the cytoplasm. Required for spatial organization of the terminus region of the chromosome (Ter macrodomain) during the cell cycle. Prevents early segregation of duplicated Ter macrodomains during cell division. Binds specifically to matS, which is a 13 bp signature motif repeated within the Ter macrodomain. This Yersinia enterocolitica serotype O:8 / biotype 1B (strain NCTC 13174 / 8081) protein is Macrodomain Ter protein.